Here is a 76-residue protein sequence, read N- to C-terminus: uncharacterized protein (76 aa).

This is an uncharacterized protein from Treponema pallidum (strain Nichols).